The sequence spans 423 residues: Putative competence-damage inducible protein (423 aa).

Belongs to the CinA family.

The sequence is that of Putative competence-damage inducible protein from Streptococcus pyogenes serotype M2 (strain MGAS10270).